The chain runs to 1892 residues: Plexin A3 (1892 aa).

The N-terminal stretch at 1–20 is a signal peptide; that stretch reads MRSLWLLVFSFSVLTGTNMA. The Sema domain occupies 21–509; sequence FPMILSERPE…SDKQVSRLPV (489 aa). Topologically, residues 21-1240 are extracellular; sequence FPMILSERPE…IYSDSTLTLP (1220 aa). N-linked (GlcNAc...) asparagine glycosylation is present at Asn-68. Disulfide bonds link Cys-86-Cys-95, Cys-121-Cys-129, Cys-283-Cys-404, Cys-299-Cys-355, Cys-373-Cys-392, Cys-512-Cys-529, Cys-518-Cys-560, Cys-521-Cys-538, and Cys-532-Cys-544. Asn-569 carries N-linked (GlcNAc...) asparagine glycosylation. A disulfide bond links Cys-595 and Cys-615. IPT/TIG domains follow at residues 861-955, 957-1041, 1044-1143, and 1146-1232; these read PRIT…YSFV, PSFS…YIYT, PNIS…FTYY, and PTFE…LHIY. Asn-1183 is a glycosylation site (N-linked (GlcNAc...) asparagine). A helical transmembrane segment spans residues 1241 to 1261; sequence AIIGIGAGGGVLLIAIIAVLI. Positions 1262 to 1315 form a coiled coil; sequence AYKRKTRDADRTLKRLQLQMDNLESRVALECKEAFAELQTDIQELTNDMDGVKI. Topologically, residues 1262–1892 are cytoplasmic; the sequence is AYKRKTRDAD…QAINLMSGSS (631 aa).

This sequence belongs to the plexin family. As to expression, detected in primary motor neurons in the embryonic nervous system.

The protein resides in the cell membrane. Coreceptor for class 3 semaphorins. Necessary for signaling by class 3 semaphorins and subsequent remodeling of the cytoskeleton. Plays a role in axon guidance in the developing nervous system. Class 3 semaphorins bind to a complex composed of a neuropilin and a plexin. The plexin modulates the affinity of the complex for specific semaphorins, and its cytoplasmic domain is required for the activation of down-stream signaling events in the cytoplasm. This is Plexin A3 (plxna3) from Danio rerio (Zebrafish).